The sequence spans 289 residues: Rhomboid-type serine protease 2 (289 aa).

6 consecutive transmembrane segments (helical) span residues 26-46, 67-87, 100-120, 122-142, 157-179, and 184-203; these read VVII…VDIQ, FPFI…LTPL, CLAL…IGLE, FVFG…LLLG, IGTY…AVLV, and FWGH…SSTL. Ser-134 acts as the Nucleophile in catalysis. The active site involves His-187.

The protein belongs to the peptidase S54 family.

It is found in the golgi apparatus membrane. The protein localises to the golgi apparatus. The protein resides in the cis-Golgi network membrane. The enzyme catalyses Cleaves type-1 transmembrane domains using a catalytic dyad composed of serine and histidine that are contributed by different transmembrane domains.. Functionally, probable rhomboid-type serine protease that catalyzes intramembrane proteolysis. This chain is Rhomboid-type serine protease 2 (RBD2), found in Podospora anserina (Pleurage anserina).